We begin with the raw amino-acid sequence, 659 residues long: Pentatricopeptide repeat-containing protein At3g26782, mitochondrial (659 aa).

The transit peptide at 1–24 directs the protein to the mitochondrion; that stretch reads MKVRSKKALFCSVSRLLHTERHTE. PPR repeat units lie at residues 40-74, 75-109, 110-144, 145-171, 182-216, 217-249, 250-284, 286-320, 321-351, 352-386, 387-422, and 423-453; these read DVFSWNSVIADLARSGDSAEALLAFSSMRKLSLYP, TRSSFPCAIKACSSLFDIFSGKQTHQQAFVFGYQS, DIFVSSALIVMYSTCGKLEDARKVFDEIPKRNIVS, WTSMIRGYDLNGNALDAVSLFKDLLVD, DSMGLVSVISACSRVPAKGLTESIHSFVIKRGFDR, GVSVGNTLLDAYAKGGEGGVAVARKIFDQIVDK, DRVSYNSIMSVYAQSGMSNEAFEVFRRLVKNKVVT, NAITLSTVLLAVSHSGALRIGKCIHDQVIRMGLED, DVIVGTSIIDMYCKCGRVETARKAFDRMKNK, NVRSWTAMIAGYGMHGHAAKALELFPAMIDSGVRP, NYITFVSVLAACSHAGLHVEGWRWFNAMKGRFGVEP, and GLEHYGCMVDLLGRAGFLQKAYDLIQRMKMK. Positions 458–533 are type E motif; the sequence is IWSSLLAACR…PPGFSLLELN (76 aa). The interval 534 to 564 is type E(+) motif; the sequence is GEVHVFLIGDEEHPQREKIYEFLAELNRKLL. Positions 565-659 are type DYW motif; it reads EAGYVSNTSS…DGGCSCGDYW (95 aa).

It belongs to the PPR family. PCMP-H subfamily.

Its subcellular location is the mitochondrion. The chain is Pentatricopeptide repeat-containing protein At3g26782, mitochondrial (PCMP-H34) from Arabidopsis thaliana (Mouse-ear cress).